A 146-amino-acid polypeptide reads, in one-letter code: Core protein D2 (146 aa).

It belongs to the orthopoxvirus OPG114 family. Part of a complex composed of the kinase OPG054, OPG092, OPG100, OPG114, OPG115, OPG142 and OPG157.

It localises to the virion. Its function is as follows. Late protein which is part of a large complex required for early virion morphogenesis. This complex participates in the formation of virosomes and the incorporation of virosomal contents into nascent immature virions. The polypeptide is Core protein D2 (OPG114) (Vaccinia virus (strain Copenhagen) (VACV)).